Here is a 192-residue protein sequence, read N- to C-terminus: Large ribosomal subunit protein bL9 (192 aa).

Residues 172–192 (DALRPEDFFDPEADGVDEDEA) form a disordered region. Acidic residues predominate over residues 179–192 (FFDPEADGVDEDEA).

The protein belongs to the bacterial ribosomal protein bL9 family.

Binds to the 23S rRNA. The chain is Large ribosomal subunit protein bL9 from Rhizobium leguminosarum bv. trifolii (strain WSM2304).